The primary structure comprises 141 residues: Hemoglobin subunit alpha-A (141 aa).

Residues 1–141 form the Globin domain; sequence VLSSGDKANV…VSTVLTSKYR (141 aa). An O2-binding site is contributed by His58. His87 provides a ligand contact to heme b.

This sequence belongs to the globin family. In terms of assembly, heterotetramer of two alpha chains and two beta chains. As to expression, red blood cells.

Its function is as follows. Involved in oxygen transport from the lung to the various peripheral tissues. This is Hemoglobin subunit alpha-A (HBAA) from Caretta caretta (Loggerhead sea turtle).